A 317-amino-acid chain; its full sequence is MSTLEPAAQSKPPGGFKLWLSQLQMKHGRKLVIALPYIWLILLFLLPFLIVFKISLAEMARAIPPYTELMEWADGQLSITLNLGNFLQLTDDPLYFDAYLQSLQVAAISTFCCLLIGYPLAWAVAHSKPSTRNILLLLVILPSWTSFLIRVYAWMGILKNNGVLNNFLLWLGVIDQPLTILHTNLAVYIGIVYAYVPFMVLPIYTALIRIDYSLVEAALDLGARPLKTFFTVIVPLTKGGIIAGSMLVFIPAVGEFVIPELLGGPDSIMIGRVLWQEFFNNRDWPVASAVAIIMLLLLIVPIMWFHKHQQKSVGEHG.

At 1-31 (MSTLEPAAQSKPPGGFKLWLSQLQMKHGRKL) the chain is on the cytoplasmic side. The helical transmembrane segment at 32–51 (VIALPYIWLILLFLLPFLIV) threads the bilayer. Residues 52–104 (FKISLAEMARAIPPYTELMEWADGQLSITLNLGNFLQLTDDPLYFDAYLQSLQ) lie on the Periplasmic side of the membrane. Residues 99–305 (YLQSLQVAAI…LLLIVPIMWF (207 aa)) enclose the ABC transmembrane type-1 domain. The chain crosses the membrane as a helical span at residues 105–124 (VAAISTFCCLLIGYPLAWAV). Over 125 to 133 (AHSKPSTRN) the chain is Cytoplasmic. The chain crosses the membrane as a helical span at residues 134–153 (ILLLLVILPSWTSFLIRVYA). The Periplasmic portion of the chain corresponds to 154-184 (WMGILKNNGVLNNFLLWLGVIDQPLTILHTN). The chain crosses the membrane as a helical span at residues 185–204 (LAVYIGIVYAYVPFMVLPIY). Residues 205-239 (TALIRIDYSLVEAALDLGARPLKTFFTVIVPLTKG) are Cytoplasmic-facing. A helical transmembrane segment spans residues 240–259 (GIIAGSMLVFIPAVGEFVIP). Residues 260 to 284 (ELLGGPDSIMIGRVLWQEFFNNRDW) are Periplasmic-facing. A helical transmembrane segment spans residues 285–304 (PVASAVAIIMLLLLIVPIMW). The Cytoplasmic segment spans residues 305 to 317 (FHKHQQKSVGEHG).

Belongs to the binding-protein-dependent transport system permease family. CysTW subfamily. The complex is composed of two ATP-binding proteins (PotG), two transmembrane proteins (PotH and PotI) and a solute-binding protein (PotF).

The protein resides in the cell inner membrane. Transport is feedback inhibited by intracellular polyamines. Its function is as follows. Part of the ABC transporter complex PotFGHI involved in putrescine uptake. Responsible for the translocation of the substrate across the membrane. Imports putrescine for maintenance of the optimal concentration of polyamines necessary for cell growth in the presence of glucose. The polypeptide is Putrescine transport system permease protein PotH (Escherichia coli (strain K12)).